The chain runs to 233 residues: MGEPQQVSALPPPPMQYIKEYTDENIQEGLAPKPPPPIKDSYMMFGNQFQCDDLIIRPLESQGIERLHPMQFDHKKELRKLNMSILINFLDLLDILIRSPGSIKREEKLEDLKLLFVHVHHLINEYRPHQARETLRVMMEVQKRQRLETAERFQKHLERVIEMIQNCLASLPDDLPHSEAGMRVKTEPMDTDDSNNCIGQNEQQRENSGHRRDQIIEKDAALCVLIDEMNERP.

Lysine 185 participates in a covalent cross-link: Glycyl lysine isopeptide (Lys-Gly) (interchain with G-Cter in SUMO1); alternate. Lysine 185 is covalently cross-linked (Glycyl lysine isopeptide (Lys-Gly) (interchain with G-Cter in SUMO2); alternate). The segment at 185-213 (KTEPMDTDDSNNCIGQNEQQRENSGHRRD) is disordered. Residue serine 194 is modified to Phosphoserine. The span at 203-213 (QQRENSGHRRD) shows a compositional bias: basic and acidic residues.

Belongs to the Mediator complex subunit 7 family. In terms of assembly, component of the Mediator complex, which is composed of MED1, MED4, MED6, MED7, MED8, MED9, MED10, MED11, MED12, MED13, MED13L, MED14, MED15, MED16, MED17, MED18, MED19, MED20, MED21, MED22, MED23, MED24, MED25, MED26, MED27, MED29, MED30, MED31, CCNC, CDK8 and CDC2L6/CDK11. The MED12, MED13, CCNC and CDK8 subunits form a distinct module termed the CDK8 module. Mediator containing the CDK8 module is less active than Mediator lacking this module in supporting transcriptional activation. Individual preparations of the Mediator complex lacking one or more distinct subunits have been variously termed ARC, CRSP, DRIP, PC2, SMCC and TRAP.

It localises to the nucleus. In terms of biological role, component of the Mediator complex, a coactivator involved in the regulated transcription of nearly all RNA polymerase II-dependent genes. Mediator functions as a bridge to convey information from gene-specific regulatory proteins to the basal RNA polymerase II transcription machinery. Mediator is recruited to promoters by direct interactions with regulatory proteins and serves as a scaffold for the assembly of a functional preinitiation complex with RNA polymerase II and the general transcription factors. The chain is Mediator of RNA polymerase II transcription subunit 7 (MED7) from Bos taurus (Bovine).